The primary structure comprises 906 residues: Ribonucleoside-diphosphate reductase large subunit-like protein (906 aa).

Disordered stretches follow at residues 1-70 (MNPA…AGNT) and 89-129 (VSWR…LSTF). Over residues 98 to 109 (PDGTPSVLSLTR) the composition is skewed to polar residues.

Belongs to the ribonucleoside diphosphate reductase large chain family.

It is found in the virion. The protein localises to the host cytoplasm. In terms of biological role, does not possess a ribonucleotide reductase activity. Betaherpesviruses probably use another strategy to expand the dNTP pool in a quiescent host cell. In Human cytomegalovirus (strain AD169) (HHV-5), this protein is Ribonucleoside-diphosphate reductase large subunit-like protein.